The sequence spans 239 residues: tRNA (guanine-N(7)-)-methyltransferase (239 aa).

The S-adenosyl-L-methionine site is built by glutamate 69, glutamate 94, aspartate 121, and aspartate 144. The active site involves aspartate 144. Lysine 148 contacts substrate. Residues 150-155 form an interaction with RNA region; the sequence is RHNKRR. Residues aspartate 180 and 217-220 contribute to the substrate site; that span reads TKFE.

This sequence belongs to the class I-like SAM-binding methyltransferase superfamily. TrmB family. In terms of assembly, monomer.

The catalysed reaction is guanosine(46) in tRNA + S-adenosyl-L-methionine = N(7)-methylguanosine(46) in tRNA + S-adenosyl-L-homocysteine. Its pathway is tRNA modification; N(7)-methylguanine-tRNA biosynthesis. Catalyzes the formation of N(7)-methylguanine at position 46 (m7G46) in tRNA. This Photorhabdus laumondii subsp. laumondii (strain DSM 15139 / CIP 105565 / TT01) (Photorhabdus luminescens subsp. laumondii) protein is tRNA (guanine-N(7)-)-methyltransferase.